Consider the following 275-residue polypeptide: Rhamnulose-1-phosphate aldolase (275 aa).

Residue glutamate 117 is part of the active site. Positions 141, 143, and 212 each coordinate Zn(2+).

Belongs to the aldolase class II family. RhaD subfamily. Homotetramer. Zn(2+) is required as a cofactor.

It localises to the cytoplasm. The catalysed reaction is L-rhamnulose 1-phosphate = (S)-lactaldehyde + dihydroxyacetone phosphate. It participates in carbohydrate degradation; L-rhamnose degradation; glycerone phosphate from L-rhamnose: step 3/3. Its function is as follows. Catalyzes the reversible cleavage of L-rhamnulose-1-phosphate to dihydroxyacetone phosphate (DHAP) and L-lactaldehyde. The polypeptide is Rhamnulose-1-phosphate aldolase (Salmonella choleraesuis (strain SC-B67)).